Consider the following 360-residue polypeptide: MSLTRLNIEAFRNIQFAQLIPAPGINVIYGQNGSGKTSILEAIYFLGMGRSFRSHLSQRVINNDNDKLTLFATLNLARGDSKIGLRRFRSGETEVKIDGEKVKRLSTLAETLPIQVITPESFSLLFEGPKSRRQFIDWGAFHADPQFYGAWTNVRRVLKQRNQLLRNGAVYTHIQFWDQEFVRYAEQVTEIRNHYVDSLNGLLKGIIGEFLPSVDVKVSFTRGWDSKTDFAELLENQYSRDLATGHTVSGPHKADLRLRVGNLPAQDALSRGQLKLLVCALRIAQGKLLKQQIDKHSIYLVDDLPSELDAQHRQLLLKQLTDTGAQVFVTAIDPAAIVDSLHTPPNRMFHVEQGRVTVVE.

30–37 contacts ATP; it reads GQNGSGKT.

Belongs to the RecF family.

Its subcellular location is the cytoplasm. Its function is as follows. The RecF protein is involved in DNA metabolism; it is required for DNA replication and normal SOS inducibility. RecF binds preferentially to single-stranded, linear DNA. It also seems to bind ATP. In Shewanella sp. (strain W3-18-1), this protein is DNA replication and repair protein RecF.